The chain runs to 981 residues: Mineralocorticoid receptor (981 aa).

The tract at residues 1–603 is modulating; the sequence is METKGYHSLP…STGSSRPSKI (603 aa). Residues 234-258 show a composition bias toward polar residues; that stretch reads SLTCSPSVENRGSRSHSPTHASNVG. Disordered regions lie at residues 234–331 and 355–376; these read SLTC…ASTV and AIQDVVPSPDTHEKGAHDVPFP. Residues S250, S259, S283, S287, and S299 each carry the phosphoserine modification. Low complexity-rich tracts occupy residues 259-300 and 309-327; these read SPLS…VSSP and SVSSPSNNTNNRSTLSSPT. Zn(2+)-binding residues include C604, C607, C621, C624, C640, C646, C656, and C659. NR C4-type zinc fingers lie at residues 604–624 and 640–664; these read CLVCGDEASGCHYGVVTCGSC and CAGRNDCIIDKIRRKNCPACRLQKC. Residues 604-669 constitute a DNA-binding region (nuclear receptor); sequence CLVCGDEASG…RLQKCLQAGM (66 aa). Residues 670-722 form a hinge region; it reads NLGARKSKKLGKLKGLHEEQPQQPPPPPPQSPEEGTTYIAPTKEPSVNSALVP. Residues 684-710 form a disordered region; that stretch reads GLHEEQPQQPPPPPPQSPEEGTTYIAP. Pro residues predominate over residues 691 to 700; that stretch reads QQPPPPPPQS. The region spanning 723-961 is the NR LBD domain; the sequence is QLTSITHALT…EFPAMLVEII (239 aa). Residues N767 and Q773 each contribute to the 21-hydroxyprogesterone site. Residues N767 and Q773 each coordinate aldosterone. Positions 767 and 773 each coordinate progesterone. The important for coactivator binding stretch occupies residues 779-782; that stretch reads KWAK. 21-hydroxyprogesterone contacts are provided by R814 and T942. The aldosterone site is built by R814 and T942. Residues R814 and T942 each contribute to the progesterone site.

The protein belongs to the nuclear hormone receptor family. NR3 subfamily. Heteromultimeric cytoplasmic complex with HSP90, HSP70, and FKBP4, in the absence of ligand. After ligand binding, it translocates to the nucleus and binds to DNA as a homodimer and as a heterodimer with NR3C1. Binds the coactivator NCOA2. May interact with HSD11B2 in the absence of ligand. Binds the coactivators NCOA1, TIF1 and NRIP1. Post-translationally, phosphorylated. Detected in liver, brain, heart, kidney, colon, aorta, hippocampus, hypothalamus and adrenal fasciculata.

The protein localises to the cytoplasm. It localises to the nucleus. Its subcellular location is the endoplasmic reticulum membrane. Functionally, receptor for both mineralocorticoids (MC) such as aldosterone and glucocorticoids (GC) such as corticosterone or cortisol. Binds to mineralocorticoid response elements (MRE) and transactivates target genes. The effect of MC is to increase ion and water transport and thus raise extracellular fluid volume and blood pressure and lower potassium levels. The chain is Mineralocorticoid receptor (Nr3c2) from Rattus norvegicus (Rat).